The primary structure comprises 187 residues: Ribosome hibernation promotion factor (187 aa).

This sequence belongs to the HPF/YfiA ribosome-associated protein family. Long HPF subfamily. Interacts with 100S ribosomes.

The protein localises to the cytoplasm. Functionally, involved in 100S ribosome formation from 70S ribosomes; 100S ribosomes are probably translationally inactive. Ribosome hibernation may be used by the cell to decrease overall energy consumption under nutrient-limiting conditions. Unlike E.coli, 100S ribosomes are present from mid-exponential growth, peak during the transition from log to stationary phase and then decrease. In Listeria monocytogenes serotype 1/2a (strain 10403S), this protein is Ribosome hibernation promotion factor.